The primary structure comprises 306 residues: D-alanine--D-alanine ligase (306 aa).

In terms of domain architecture, ATP-grasp spans 101-301; it reads KKILAHAGLP…FPDLVEHLVR (201 aa). An ATP-binding site is contributed by 129-185; it reads VAELGLPVVVKAPTQGSSIGVYIVEREEDLEARITDAVAYGGTRVLVEKFIAGPELT. Mg(2+) contacts are provided by D256, E268, and N270.

It belongs to the D-alanine--D-alanine ligase family. The cofactor is Mg(2+). Mn(2+) is required as a cofactor.

The protein localises to the cytoplasm. The catalysed reaction is 2 D-alanine + ATP = D-alanyl-D-alanine + ADP + phosphate + H(+). It functions in the pathway cell wall biogenesis; peptidoglycan biosynthesis. Functionally, cell wall formation. This chain is D-alanine--D-alanine ligase, found in Desulforudis audaxviator (strain MP104C).